A 427-amino-acid chain; its full sequence is Glutamate-1-semialdehyde 2,1-aminomutase (427 aa).

Position 265 is an N6-(pyridoxal phosphate)lysine (lysine 265).

Belongs to the class-III pyridoxal-phosphate-dependent aminotransferase family. HemL subfamily. Homodimer. The cofactor is pyridoxal 5'-phosphate.

The protein localises to the cytoplasm. It carries out the reaction (S)-4-amino-5-oxopentanoate = 5-aminolevulinate. Its pathway is porphyrin-containing compound metabolism; protoporphyrin-IX biosynthesis; 5-aminolevulinate from L-glutamyl-tRNA(Glu): step 2/2. The protein is Glutamate-1-semialdehyde 2,1-aminomutase of Pseudomonas putida (strain ATCC 47054 / DSM 6125 / CFBP 8728 / NCIMB 11950 / KT2440).